Reading from the N-terminus, the 324-residue chain is AT-hook motif nuclear-localized protein 24 (324 aa).

Positions methionine 1–serine 12 are enriched in polar residues. Disordered stretches follow at residues methionine 1–isoleucine 122 and methionine 262–tyrosine 324. Positions leucine 24–phenylalanine 33 are enriched in low complexity. The segment covering asparagine 69 to serine 79 has biased composition (polar residues). The segment covering glycine 88–glycine 99 has biased composition (gly residues). The segment at residues arginine 105 to lysine 117 is a DNA-binding region (a.T hook). One can recognise a PPC domain in the interval alanine 129–glycine 268. Low complexity predominate over residues methionine 280–glycine 297. A compositionally biased stretch (polar residues) spans glycine 304–serine 318.

Its subcellular location is the nucleus. Functionally, transcription factor that specifically binds AT-rich DNA sequences related to the nuclear matrix attachment regions (MARs). The sequence is that of AT-hook motif nuclear-localized protein 24 from Arabidopsis thaliana (Mouse-ear cress).